The sequence spans 139 residues: Large ribosomal subunit protein uL16 (139 aa).

The segment at 1-23 (MLQPARTKYRKMHKGRMPGSAHR) is disordered. The span at 7 to 16 (TKYRKMHKGR) shows a compositional bias: basic residues.

Belongs to the universal ribosomal protein uL16 family. As to quaternary structure, part of the 50S ribosomal subunit.

Binds 23S rRNA and is also seen to make contacts with the A and possibly P site tRNAs. The protein is Large ribosomal subunit protein uL16 of Myxococcus xanthus (strain DK1622).